The chain runs to 447 residues: Serine/threonine-protein phosphatase 2A 55 kDa regulatory subunit B delta isoform (447 aa).

7 WD repeats span residues 26–65 (AEAD…KSRP), 91–132 (EIEE…KRVE), 175–213 (AHTY…RSFN), 224–264 (ELTE…LCDR), 283–321 (EIIS…RPVE), 338–379 (ENDC…DITL), and 414–447 (DFNK…DKVN).

Belongs to the phosphatase 2A regulatory subunit B family. In terms of assembly, PP2A consists of a common heterodimeric core enzyme, composed of a 36 kDa catalytic subunit (subunit C) and a 65 kDa constant regulatory subunit (PR65 or subunit A), that associates with a variety of regulatory subunits. Proteins that associate with the core dimer include three families of regulatory subunits B (the R2/B/PR55/B55, R3/B''/PR72/PR130/PR59 and R5/B'/B56 families), the 48 kDa variable regulatory subunit, viral proteins, and cell signaling molecules. Interacts with ensa (when phosphorylated at 'Ser-67') and arpp19 (when phosphorylated at 'Ser-67'), leading to inhibit PP2A activity.

Its subcellular location is the cytoplasm. Its function is as follows. Substrate-recognition subunit of protein phosphatase 2A (PP2A) that plays a key role in cell cycle by controlling mitosis entry and exit. The activity of PP2A complexes containing ppp2r2d (PR55-delta) fluctuate during the cell cycle: the activity is high in interphase and low in mitosis. During mitosis, activity of PP2A is inhibited via interaction with phosphorylated ensa and arpp19 inhibitors. PP2A complexes containing ppp2r2d (PR55-delta) also regulate the activity of TGF-beta/Activin/Nodal signaling by restricting receptor activity. Within the PP2A complexes, the B regulatory subunits modulate substrate selectivity and catalytic activity, and may also direct the localization of the catalytic enzyme to a particular subcellular compartment. The chain is Serine/threonine-protein phosphatase 2A 55 kDa regulatory subunit B delta isoform (ppp2r2d) from Xenopus laevis (African clawed frog).